The primary structure comprises 610 residues: Myoneurin (610 aa).

A BTB domain is found at 24 to 89 (CDCTIVIGEF…IYTGTLNLDS (66 aa)). The interval 169 to 197 (QGALAKKSSQTKKKKKAFNSPKTGQNKTV) is disordered. 2 consecutive short sequence motifs (nuclear localization signal) follow at residues 174–190 (KKSS…NSPK) and 257–262 (KRKRGK). Residues 188–197 (SPKTGQNKTV) show a composition bias toward polar residues. Ser289 is modified (phosphoserine). 8 C2H2-type zinc fingers span residues 302-324 (PMCN…MRIH), 330-352 (YVCH…VRTH), 358-381 (YKCE…RMHH), 387-409 (YKCD…ARKH), 415-437 (YVCD…VRRH), 443-465 (YVCD…SRKH), 471-493 (YICG…FRSH), and 499-522 (FICE…TKVH). The disordered stretch occupies residues 521-556 (VHSGADKTLDSSAEDHTLSEQDSIQKSPLSETMDVK). Residues 523-539 (SGADKTLDSSAEDHTLS) show a composition bias toward basic and acidic residues. Residues 540 to 550 (EQDSIQKSPLS) are compositionally biased toward polar residues.

This sequence belongs to the krueppel C2H2-type zinc-finger protein family. Mainly expressed in the neuromuscular system. Located in and around synaptic myonuclei in adult muscle. Expression is dysregulated after nerve injury. Also found in the testis, ovary and placenta.

The protein localises to the nucleus. The protein is Myoneurin (MYNN) of Homo sapiens (Human).